The primary structure comprises 522 residues: Golgin subfamily A member 6-like protein 10 (522 aa).

Pro residues predominate over residues 1 to 11 (MWPQPRLPPHP). The disordered stretch occupies residues 1 to 77 (MWPQPRLPPH…DSATGIYGEG (77 aa)). A compositionally biased stretch (polar residues) spans 51 to 62 (NGSSPDTATSGG). Positions 157–328 (SKVEQLQDET…RLCEQEKLPG (172 aa)) form a coiled coil. Over residues 439 to 452 (KELEKSGGAEEPRG) the composition is skewed to basic and acidic residues. The tract at residues 439–503 (KELEKSGGAE…TGEAAGGAEE (65 aa)) is disordered. Composition is skewed to low complexity over residues 456–471 (AAAA…PQGA) and 489–503 (GEAV…GAEE).

It belongs to the GOLGA6 family.

The polypeptide is Golgin subfamily A member 6-like protein 10 (Homo sapiens (Human)).